A 209-amino-acid chain; its full sequence is Protein-L-isoaspartate O-methyltransferase (209 aa).

The active site involves Ser59.

The protein belongs to the methyltransferase superfamily. L-isoaspartyl/D-aspartyl protein methyltransferase family.

Its subcellular location is the cytoplasm. The enzyme catalyses [protein]-L-isoaspartate + S-adenosyl-L-methionine = [protein]-L-isoaspartate alpha-methyl ester + S-adenosyl-L-homocysteine. Catalyzes the methyl esterification of L-isoaspartyl residues in peptides and proteins that result from spontaneous decomposition of normal L-aspartyl and L-asparaginyl residues. It plays a role in the repair and/or degradation of damaged proteins. This Helicobacter pylori (strain G27) protein is Protein-L-isoaspartate O-methyltransferase.